The chain runs to 114 residues: Probable 4-amino-4-deoxy-L-arabinose-phosphoundecaprenol flippase subunit ArnE (114 aa).

A run of 3 helical transmembrane segments spans residues proline 41–leucine 61, leucine 64–serine 84, and tyrosine 94–leucine 114. The region spanning leucine 43–glycine 112 is the EamA domain.

Belongs to the ArnE family. Heterodimer of ArnE and ArnF.

The protein localises to the cell inner membrane. Its pathway is bacterial outer membrane biogenesis; lipopolysaccharide biosynthesis. In terms of biological role, translocates 4-amino-4-deoxy-L-arabinose-phosphoundecaprenol (alpha-L-Ara4N-phosphoundecaprenol) from the cytoplasmic to the periplasmic side of the inner membrane. The protein is Probable 4-amino-4-deoxy-L-arabinose-phosphoundecaprenol flippase subunit ArnE of Aeromonas hydrophila subsp. hydrophila (strain ATCC 7966 / DSM 30187 / BCRC 13018 / CCUG 14551 / JCM 1027 / KCTC 2358 / NCIMB 9240 / NCTC 8049).